Reading from the N-terminus, the 340-residue chain is uncharacterized protein (340 aa).

An RING-CH-type zinc finger spans residues 6-70 (KYEKSSARCW…PQCLTAYRIA (65 aa)). Residues Cys14, Cys17, Cys37, Cys39, His44, Cys47, Cys60, and Cys63 each contribute to the Zn(2+) site. The next 3 helical transmembrane spans lie at 249-269 (EFWI…TKIL), 274-294 (PILL…GNFT), and 300-320 (IIGA…FIAW).

Its subcellular location is the membrane. This is an uncharacterized protein from Schizosaccharomyces pombe (strain 972 / ATCC 24843) (Fission yeast).